The sequence spans 273 residues: Large ribosomal subunit protein uL2 (273 aa).

The tract at residues 228–273 (VDHPHGGGEGKTSGGRHPVTPWGFPTKGKKTRKNKRTSKFIVKKRK) is disordered. Residues 254–273 (KGKKTRKNKRTSKFIVKKRK) show a composition bias toward basic residues.

Belongs to the universal ribosomal protein uL2 family. In terms of assembly, part of the 50S ribosomal subunit. Forms a bridge to the 30S subunit in the 70S ribosome.

In terms of biological role, one of the primary rRNA binding proteins. Required for association of the 30S and 50S subunits to form the 70S ribosome, for tRNA binding and peptide bond formation. It has been suggested to have peptidyltransferase activity; this is somewhat controversial. Makes several contacts with the 16S rRNA in the 70S ribosome. The polypeptide is Large ribosomal subunit protein uL2 (Rickettsia canadensis (strain McKiel)).